Reading from the N-terminus, the 356-residue chain is Guanine nucleotide-binding protein alpha-17 subunit (356 aa).

Gly2 carries the N-myristoyl glycine lipid modification. Cys4 carries S-palmitoyl cysteine lipidation. Residues 32-356 (SIVKLLLLGA…QKNLQKAGMM (325 aa)) enclose the G-alpha domain. A G1 motif region spans residues 35–48 (KLLLLGAGECGKST). GTP-binding positions include 40–47 (GAGECGKS), 177–183 (LYSRVAT), 202–206 (DVGGQ), 271–274 (NKKD), and Ala328. Mg(2+) is bound by residues Ser47 and Thr183. Residues 175–183 (DILYSRVAT) form a G2 motif region. Residues 198-207 (FRVFDVGGQR) form a G3 motif region. Residues 267-274 (ILFMNKKD) form a G4 motif region. The tract at residues 326 to 331 (TCATDT) is G5 motif.

The protein belongs to the G-alpha family. G proteins are composed of 3 units; alpha, beta and gamma. The alpha chain contains the guanine nucleotide binding site. In terms of tissue distribution, expressed in sensory neurons in the head and tail. Expressed in amphid AWC neurons, to a lesser extent in AWB and weakly in AWA, ASH and ADF neurons (head sensory neurons). Expressed in phasmid PHA and PHB neurons (tail sensory neurons).

It is found in the cell projection. The protein resides in the cilium. Its subcellular location is the dendrite. Functionally, guanine nucleotide-binding proteins (G proteins) are involved as modulators or transducers in various transmembrane signaling systems. This specific G-alpha subunit plays an important role in olfaction and in cilia morphogenesis. Involved in chemotactic responses to attractants diacetyl, pyrazine, 2,4,5-trimethylthiazole, benzaldehyde, isoamyl alcohol, butanone and 2,3-pentanedione. Displays a redundant function with gpa-3 in chemotactic responses. Plays a role in the avoidance response to the noxious chemical quinine in ASH sensory neurons. Involved in avoidance responses to copper, sodium dodecyl sulfate and linoleic acid. Involved in osmotic avoidance and mechanosensory responses. Involved in specifying fan-like morphology of cilia of head sensory neurons AWC. Plays a role in the detection of preferred food sources by mediating the recognition of food odors in olfactory sensory neurons. The chain is Guanine nucleotide-binding protein alpha-17 subunit from Caenorhabditis elegans.